Here is a 188-residue protein sequence, read N- to C-terminus: dCTP deaminase (188 aa).

Residues 111–116 (KSTYAR), 135–137 (TLE), glutamine 156, tyrosine 170, and glutamine 180 contribute to the dCTP site. Glutamate 137 acts as the Proton donor/acceptor in catalysis.

The protein belongs to the dCTP deaminase family. Homotrimer.

The catalysed reaction is dCTP + H2O + H(+) = dUTP + NH4(+). It participates in pyrimidine metabolism; dUMP biosynthesis; dUMP from dCTP (dUTP route): step 1/2. Its function is as follows. Catalyzes the deamination of dCTP to dUTP. In Pseudomonas syringae pv. tomato (strain ATCC BAA-871 / DC3000), this protein is dCTP deaminase.